The following is a 402-amino-acid chain: Candidapepsin-1 (402 aa).

Residues 1 to 25 (MVAIVTLTRQVLLTIALALFAQGAA) constitute a signal peptide (or 18, or 21). The propeptide at 26–62 (IPEEAAKRDDNPGFVALDFDVLRKPLNLTEALLREKR) is activation peptide. Asn-52 is a glycosylation site (N-linked (GlcNAc...) asparagine). A Peptidase A1 domain is found at 76-389 (YASKVSVGSN…NLDANTISIA (314 aa)). Residue Asp-94 is part of the active site. Cys-109 and Cys-115 are disulfide-bonded. Asp-282 is a catalytic residue. Cys-320 and Cys-354 are joined by a disulfide.

It belongs to the peptidase A1 family. O-glycosylated.

Its subcellular location is the secreted. It carries out the reaction Preferential cleavage at the carboxyl of hydrophobic amino acids, but fails to cleave 15-Leu-|-Tyr-16, 16-Tyr-|-Leu-17 and 24-Phe-|-Phe-25 of insulin B chain. Activates trypsinogen, and degrades keratin.. This is Candidapepsin-1 (SAPP1) from Candida parapsilosis (Yeast).